The chain runs to 87 residues: uncharacterized protein (87 aa).

Residues 67 to 87 (TGGDPREAVVRPADQVEGYTG) form a disordered region.

This is an uncharacterized protein from Mycobacterium bovis (strain ATCC BAA-935 / AF2122/97).